Reading from the N-terminus, the 284-residue chain is Tropomyosin (284 aa).

The tract at residues 1 to 47 (MDAIKKKMQAMKIEKDNAMDRADAAEEKARQQQERVEKLEEELRDTQ) is disordered. A coiled-coil region spans residues 1-284 (MDAIKKKMQA…DQTFQELSGY (284 aa)). The span at 12-38 (KIEKDNAMDRADAAEEKARQQQERVEK) shows a compositional bias: basic and acidic residues.

The protein belongs to the tropomyosin family.

Its function is as follows. Tropomyosin, in association with the troponin complex, plays a central role in the calcium dependent regulation of muscle contraction. This Trichinella spiralis (Trichina worm) protein is Tropomyosin.